Reading from the N-terminus, the 444-residue chain is Methylenetetrahydrofolate--tRNA-(uracil-5-)-methyltransferase TrmFO (444 aa).

9 to 14 (GAGMAG) is an FAD binding site.

Belongs to the MnmG family. TrmFO subfamily. The cofactor is FAD.

The protein localises to the cytoplasm. It carries out the reaction uridine(54) in tRNA + (6R)-5,10-methylene-5,6,7,8-tetrahydrofolate + NADH + H(+) = 5-methyluridine(54) in tRNA + (6S)-5,6,7,8-tetrahydrofolate + NAD(+). It catalyses the reaction uridine(54) in tRNA + (6R)-5,10-methylene-5,6,7,8-tetrahydrofolate + NADPH + H(+) = 5-methyluridine(54) in tRNA + (6S)-5,6,7,8-tetrahydrofolate + NADP(+). Its function is as follows. Catalyzes the folate-dependent formation of 5-methyl-uridine at position 54 (M-5-U54) in all tRNAs. This Cereibacter sphaeroides (strain KD131 / KCTC 12085) (Rhodobacter sphaeroides) protein is Methylenetetrahydrofolate--tRNA-(uracil-5-)-methyltransferase TrmFO.